The primary structure comprises 474 residues: Probable diacyglycerol O-acyltransferase Tgs4 (474 aa).

His135 serves as the catalytic Proton acceptor.

Belongs to the long-chain O-acyltransferase family.

The enzyme catalyses an acyl-CoA + a 1,2-diacyl-sn-glycerol = a triacyl-sn-glycerol + CoA. It functions in the pathway glycerolipid metabolism; triacylglycerol biosynthesis. Functionally, required for maintaining the appropriate mycolic acid composition and permeability of the envelope on its exposure to acidic pH. The protein is Probable diacyglycerol O-acyltransferase Tgs4 (tgs4) of Mycobacterium tuberculosis (strain CDC 1551 / Oshkosh).